A 409-amino-acid chain; its full sequence is Bone morphogenetic protein 4 (409 aa).

The first 19 residues, 1–19 (MIPGNRMLMVVLLCQVLLG), serve as a signal peptide directing secretion. A propeptide spanning residues 20 to 293 (GASHASLIPE…ALTRRRRAKR (274 aa)) is cleaved from the precursor. Ser-91 carries the phosphoserine modification. N-linked (GlcNAc...) asparagine glycosylation is found at Asn-144 and Asn-209. Residues 284–308 (ALTRRRRAKRSPKHHPQRARKKNKN) are disordered. Intrachain disulfides connect Cys-309–Cys-374, Cys-338–Cys-406, and Cys-342–Cys-408. Asn-351 and Asn-366 each carry an N-linked (GlcNAc...) asparagine glycan.

The protein belongs to the TGF-beta family. Homodimer; disulfide-linked. Interacts with GREM2. Part of a complex consisting of TWSG1 and CHRD. Interacts with the serine proteases, HTRA1 and HTRA3; the interaction with either inhibits BMP4-mediated signaling. The HTRA protease activity is required for this inhibition. Interacts with SOSTDC1. Interacts with FBN1 (via N-terminal domain) and FBN2. Interacts with type I receptor BMPR1A. Interacts with type II receptor BMPR2. Interacts with FSTL1; this interaction inhibits the activation of the BMP4/Smad1/5/8 signaling pathway. Interacts with TGFBR3.

It is found in the secreted. The protein resides in the extracellular space. It localises to the extracellular matrix. Functionally, growth factor of the TGF-beta superfamily that plays essential roles in many developmental processes, including neurogenesis, vascular development, angiogenesis and osteogenesis. Acts in concert with PTHLH/PTHRP to stimulate ductal outgrowth during embryonic mammary development and to inhibit hair follicle induction. Initiates the canonical BMP signaling cascade by associating with type I receptor BMPR1A and type II receptor BMPR2. Once all three components are bound together in a complex at the cell surface, BMPR2 phosphorylates and activates BMPR1A. In turn, BMPR1A propagates signal by phosphorylating SMAD1/5/8 that travel to the nucleus and act as activators and repressors of transcription of target genes. Positively regulates the expression of odontogenic development regulator MSX1 via inducing the IPO7-mediated import of SMAD1 to the nucleus. Required for MSX1-mediated mesenchymal molar tooth bud development beyond the bud stage, via promoting Wnt signaling. Acts as a positive regulator of odontoblast differentiation during mesenchymal tooth germ formation, expression is repressed during the bell stage by MSX1-mediated inhibition of CTNNB1 signaling. Able to induce its own expression in dental mesenchymal cells and also in the neighboring dental epithelial cells via an MSX1-mediated pathway. Can also signal through non-canonical BMP pathways such as ERK/MAP kinase, PI3K/Akt, or SRC cascades. For example, induces SRC phosphorylation which, in turn, activates VEGFR2, leading to an angiogenic response. This chain is Bone morphogenetic protein 4, found in Suncus murinus (Asian house shrew).